The sequence spans 415 residues: Gamma-glutamyl phosphate reductase (415 aa).

This sequence belongs to the gamma-glutamyl phosphate reductase family.

The protein resides in the cytoplasm. It carries out the reaction L-glutamate 5-semialdehyde + phosphate + NADP(+) = L-glutamyl 5-phosphate + NADPH + H(+). Its pathway is amino-acid biosynthesis; L-proline biosynthesis; L-glutamate 5-semialdehyde from L-glutamate: step 2/2. In terms of biological role, catalyzes the NADPH-dependent reduction of L-glutamate 5-phosphate into L-glutamate 5-semialdehyde and phosphate. The product spontaneously undergoes cyclization to form 1-pyrroline-5-carboxylate. This is Gamma-glutamyl phosphate reductase from Listeria innocua serovar 6a (strain ATCC BAA-680 / CLIP 11262).